Consider the following 290-residue polypeptide: Nucleoid occlusion protein (290 aa).

Residues 153-172 constitute a DNA-binding region (H-T-H motif); that stretch reads EALAQRLGKGQSTIANKLRL.

Belongs to the ParB family.

It localises to the cytoplasm. It is found in the nucleoid. Functionally, effects nucleoid occlusion by binding relatively nonspecifically to DNA and preventing the assembly of the division machinery in the vicinity of the nucleoid, especially under conditions that disturb the cell cycle. It helps to coordinate cell division and chromosome segregation by preventing the formation of the Z ring through the nucleoid, which would cause chromosome breakage. In Bacillus cereus (strain AH187), this protein is Nucleoid occlusion protein.